The following is a 355-amino-acid chain: S-adenosylmethionine:tRNA ribosyltransferase-isomerase (355 aa).

This sequence belongs to the QueA family. Monomer.

The protein resides in the cytoplasm. It carries out the reaction 7-aminomethyl-7-carbaguanosine(34) in tRNA + S-adenosyl-L-methionine = epoxyqueuosine(34) in tRNA + adenine + L-methionine + 2 H(+). The protein operates within tRNA modification; tRNA-queuosine biosynthesis. Its function is as follows. Transfers and isomerizes the ribose moiety from AdoMet to the 7-aminomethyl group of 7-deazaguanine (preQ1-tRNA) to give epoxyqueuosine (oQ-tRNA). In Pectobacterium carotovorum subsp. carotovorum (strain PC1), this protein is S-adenosylmethionine:tRNA ribosyltransferase-isomerase.